A 291-amino-acid polypeptide reads, in one-letter code: 2-C-methyl-D-erythritol 4-phosphate cytidylyltransferase (291 aa).

Residues 1-23 (MTERDFDTPVETPTVQPAPAQGT) form a disordered region.

Belongs to the IspD/TarI cytidylyltransferase family. IspD subfamily.

It carries out the reaction 2-C-methyl-D-erythritol 4-phosphate + CTP + H(+) = 4-CDP-2-C-methyl-D-erythritol + diphosphate. The protein operates within isoprenoid biosynthesis; isopentenyl diphosphate biosynthesis via DXP pathway; isopentenyl diphosphate from 1-deoxy-D-xylulose 5-phosphate: step 2/6. Functionally, catalyzes the formation of 4-diphosphocytidyl-2-C-methyl-D-erythritol from CTP and 2-C-methyl-D-erythritol 4-phosphate (MEP). The sequence is that of 2-C-methyl-D-erythritol 4-phosphate cytidylyltransferase from Bifidobacterium longum subsp. infantis (strain ATCC 15697 / DSM 20088 / JCM 1222 / NCTC 11817 / S12).